The sequence spans 309 residues: Protease HtpX homolog (309 aa).

The next 2 membrane-spanning stretches (helical) occupy residues 7–27 and 28–48; these read FILL…IGGP and TGML…YWNA. H134 lines the Zn(2+) pocket. Residue E135 is part of the active site. A Zn(2+)-binding site is contributed by H138. The next 2 helical transmembrane spans lie at 149-169 and 177-197; these read VTAT…FFGG and PGGL…AMLV. E206 contributes to the Zn(2+) binding site. The disordered stretch occupies residues 289–309; that stretch reads TRGRSGTAVPTGATGKSGPWG.

Belongs to the peptidase M48B family. Requires Zn(2+) as cofactor.

The protein localises to the cell inner membrane. In Caulobacter sp. (strain K31), this protein is Protease HtpX homolog.